A 505-amino-acid chain; its full sequence is Metal transporter Nramp3.2 (505 aa).

The next 12 membrane-spanning stretches (helical) occupy residues 50–70 (LWLF…PGNL), 78–98 (AIAG…GLLV), 127–147 (MVLW…EVIG), 159–179 (FVPL…FLFL), 187–207 (LEAV…WMFA), 233–253 (AVGV…SALV), 280–300 (ALVI…KGFY), 321–341 (YGGG…AAGQ), 369–389 (ALIT…VFDT), 400–420 (WLNV…LCLV), 439–459 (AWLV…DFFF), and 466–486 (AFTT…IYLI).

The protein belongs to the NRAMP (TC 2.A.55) family. As to expression, expressed in roots, stems, buds and leaves.

The protein resides in the vacuole membrane. It carries out the reaction Mn(2+)(in) = Mn(2+)(out). The enzyme catalyses Fe(2+)(in) = Fe(2+)(out). Divalent metal transporter. Can transport manganese (Mn) and iron (Fe). Involved in the release of metals stored in the vacuole. The chain is Metal transporter Nramp3.2 from Populus trichocarpa (Western balsam poplar).